A 316-amino-acid polypeptide reads, in one-letter code: Nucleotide-binding protein Sala_2050 (316 aa).

18-25 (GLSGAGKS) serves as a coordination point for ATP. 69–72 (DSRS) lines the GTP pocket. The segment at 283–316 (GYEPTLTHRNLDSAPQDGLEGKPPSAARASGGAR) is disordered.

This sequence belongs to the RapZ-like family.

Functionally, displays ATPase and GTPase activities. In Sphingopyxis alaskensis (strain DSM 13593 / LMG 18877 / RB2256) (Sphingomonas alaskensis), this protein is Nucleotide-binding protein Sala_2050.